We begin with the raw amino-acid sequence, 427 residues long: Pseudouridylate synthase 1 homolog (427 aa).

The segment at 20–83 is disordered; that stretch reads GPRPSCSPRM…DEERREKPPK (64 aa). Residues 44-79 show a composition bias toward basic and acidic residues; the sequence is QDRRSCSGRAGGDRVWEDGEHPAKKLKSGGDEERRE. Asp146 (nucleophile) is an active-site residue. Residues 407-427 form a disordered region; it reads GGTGAKVPSPLEGSEGDGDTD. Residues Ser415 and Ser420 each carry the phosphoserine modification. Thr426 is modified (phosphothreonine).

Belongs to the tRNA pseudouridine synthase TruA family. As to quaternary structure, monomer. Forms a complex with RARG and the SRA1 RNA in the nucleus. Widely expressed. High levels of expression found in brain and skeletal muscle.

It is found in the mitochondrion. The protein localises to the nucleus. Its subcellular location is the cytoplasm. It catalyses the reaction a uridine in tRNA = a pseudouridine in tRNA. The enzyme catalyses uridine(38/39/40) in tRNA = pseudouridine(38/39/40) in tRNA. The catalysed reaction is a uridine in mRNA = a pseudouridine in mRNA. Functionally, pseudouridylate synthase that catalyzes pseudouridylation of tRNAs and mRNAs. Acts on positions 27/28 in the anticodon stem and also positions 34 and 36 in the anticodon of an intron containing tRNA. Also catalyzes pseudouridylation of mRNAs: mediates pseudouridylation of mRNAs with the consensus sequence 5'-UGUAG-3'. Acts as a regulator of pre-mRNA splicing by mediating pseudouridylation of pre-mRNAs at locations associated with alternatively spliced regions. Pseudouridylation of pre-mRNAs near splice sites directly regulates mRNA splicing and mRNA 3'-end processing. Involved in regulation of nuclear receptor activity through pseudouridylation of SRA1 mRNA. This chain is Pseudouridylate synthase 1 homolog, found in Homo sapiens (Human).